The following is a 373-amino-acid chain: UDP-N-acetylenolpyruvoylglucosamine reductase (373 aa).

The FAD-binding PCMH-type domain maps to 30–203 (LACTANSVVT…SRVGFRLHTD (174 aa)). Residue arginine 180 is part of the active site. The active-site Proton donor is the serine 258. Glutamate 356 is an active-site residue.

Belongs to the MurB family. FAD is required as a cofactor.

Its subcellular location is the cytoplasm. The enzyme catalyses UDP-N-acetyl-alpha-D-muramate + NADP(+) = UDP-N-acetyl-3-O-(1-carboxyvinyl)-alpha-D-glucosamine + NADPH + H(+). It participates in cell wall biogenesis; peptidoglycan biosynthesis. Its function is as follows. Cell wall formation. This is UDP-N-acetylenolpyruvoylglucosamine reductase from Psychrobacter arcticus (strain DSM 17307 / VKM B-2377 / 273-4).